Here is a 227-residue protein sequence, read N- to C-terminus: Lipoprotein-releasing system ATP-binding protein LolD (227 aa).

In terms of domain architecture, ABC transporter spans Leu7 to Ala227. Residue Gly43–Ser50 coordinates ATP.

The protein belongs to the ABC transporter superfamily. Lipoprotein translocase (TC 3.A.1.125) family. In terms of assembly, the complex is composed of two ATP-binding proteins (LolD) and two transmembrane proteins (LolC and LolE).

The protein localises to the cell inner membrane. Part of the ABC transporter complex LolCDE involved in the translocation of mature outer membrane-directed lipoproteins, from the inner membrane to the periplasmic chaperone, LolA. Responsible for the formation of the LolA-lipoprotein complex in an ATP-dependent manner. The polypeptide is Lipoprotein-releasing system ATP-binding protein LolD (Pseudomonas syringae pv. tomato (strain ATCC BAA-871 / DC3000)).